Reading from the N-terminus, the 474-residue chain is SHC-transforming protein 3 (474 aa).

The disordered stretch occupies residues 1 to 27; it reads MSATRKSRAGDEPLPRPPRGAPHTSDQ. Residues 29-214 form the PID domain; that stretch reads LGPGVTYVVK…LDEPWTEEEG (186 aa). Residues 215 to 378 are CH1; the sequence is DGPDHPYYNS…RMLEELNAEP (164 aa). At Ser282 the chain carries Phosphoserine. The interval 308–328 is disordered; sequence QPVPPQVWPAATSSTESSPRK. An SH2 domain is found at 379–470; sequence WYQGEMSRKE…GSELCLQQPV (92 aa).

Interacts with the Trk receptors in a phosphotyrosine-dependent manner. Once activated, binds to GRB2. Interacts with activated EGF receptors. In terms of processing, tyrosine phosphorylated. Predominantly expressed in the adult brain.

Its function is as follows. Signaling adapter that couples activated growth factor receptors to signaling pathway in neurons. Involved in the signal transduction pathways of neurotrophin-activated Trk receptors in cortical neurons. The sequence is that of SHC-transforming protein 3 (Shc3) from Mus musculus (Mouse).